We begin with the raw amino-acid sequence, 312 residues long: Pre-mRNA-splicing factor 38A (312 aa).

The interval 1–179 is N-terminal protein interaction domain; sequence MANRTVKDAH…VLEEAEQLEP (179 aa). Residues S11, S193, S194, S209, and S226 each carry the phosphoserine modification. Residues 170–204 are a coiled coil; that stretch reads VLEEAEQLEPRVSALEEDMDDVESSEEEEEEDEKL. Residues 181 to 312 form a disordered region; it reads VSALEEDMDD…SHKKSRRGNE (132 aa). The span at 184–202 shows a compositional bias: acidic residues; the sequence is LEEDMDDVESSEEEEEEDE. The segment covering 203-224 has biased composition (basic and acidic residues); it reads KLERVPSPDHRRRSYRDLDKPR. 2 stretches are compositionally biased toward basic residues: residues 225–294 and 301–312; these read RSPA…RSHS and KKSHKKSRRGNE.

It belongs to the PRP38 family. Component of the spliceosome B complex. Interacts (via N-terminal interaction domain) with ZMAT2 and MFAP1.

It localises to the nucleus. Functionally, involved in pre-mRNA splicing as a component of the spliceosome. The polypeptide is Pre-mRNA-splicing factor 38A (Prpf38a) (Mus musculus (Mouse)).